Here is a 574-residue protein sequence, read N- to C-terminus: Membrane protein insertase YidC (574 aa).

A helical membrane pass occupies residues 6-26; that stretch reads VFLIFAWLMVAALLWMEWGKE. The segment at 65-85 is disordered; it reads QAGAPGKVPATSTTTATPAAA. 5 helical membrane-spanning segments follow: residues 350-370, 376-396, 447-467, 491-511, and 525-545; these read VIDYSRFSIMAIIGQGLFWVL, FLHNWGWAIVGLVVLLRLVLY, GGCLPLLIQMPIFFALYWVLV, FILPALNIAIMWATQKLTPTP, and PLVFGAMMAFVPSGLVLYWVV.

It belongs to the OXA1/ALB3/YidC family. Type 1 subfamily. As to quaternary structure, interacts with the Sec translocase complex via SecD. Specifically interacts with transmembrane segments of nascent integral membrane proteins during membrane integration.

Its subcellular location is the cell inner membrane. Functionally, required for the insertion and/or proper folding and/or complex formation of integral membrane proteins into the membrane. Involved in integration of membrane proteins that insert both dependently and independently of the Sec translocase complex, as well as at least some lipoproteins. Aids folding of multispanning membrane proteins. This chain is Membrane protein insertase YidC, found in Xanthomonas oryzae pv. oryzae (strain PXO99A).